Here is a 2053-residue protein sequence, read N- to C-terminus: Cell adhesion molecule DSCAML1 (2053 aa).

The signal sequence occupies residues 1-18 (MWLVTFLLLLDSLHKARP). Ig-like C2-type domains lie at 19-119 (EDVG…NIRI), 115-217 (PNIR…ARLS), 226-310 (PTIL…GILT), 314-396 (PLHV…QTAQ), 408-501 (PRIV…ARIN), 506-586 (PSIR…LSIS), 596-685 (PPLI…RQLI), 690-784 (PRFV…MFLT), and 788-885 (PAMI…LTVQ). Topologically, residues 19–1591 (EDVGTSLYFV…AQGEGDDVKK (1573 aa)) are extracellular. 7 disulfide bridges follow: Cys-47–Cys-103, Cys-146–Cys-198, Cys-247–Cys-294, Cys-336–Cys-386, Cys-429–Cys-485, Cys-526–Cys-575, and Cys-617–Cys-669. Asn-79 is a glycosylation site (N-linked (GlcNAc...) asparagine). Asn-368 and Asn-471 each carry an N-linked (GlcNAc...) asparagine glycan. N-linked (GlcNAc...) asparagine glycans are attached at residues Asn-666 and Asn-710. An intrachain disulfide couples Cys-711 to Cys-767. Asn-809 is a glycosylation site (N-linked (GlcNAc...) asparagine). Cysteines 810 and 867 form a disulfide. Fibronectin type-III domains are found at residues 887–984 (PPDP…TEEA), 989–1088 (PPMD…TLED), 1093–1189 (PPEN…TKED), and 1193–1288 (PPAG…AGKA). N-linked (GlcNAc...) asparagine glycosylation is found at Asn-1144 and Asn-1162. The Ig-like C2-type 10 domain maps to 1278–1377 (EKVTIEPAGK…TGGFDTIIVN (100 aa)). The cysteines at positions 1311 and 1363 are disulfide-linked. A glycan (N-linked (GlcNAc...) asparagine) is linked at Asn-1345. 2 consecutive Fibronectin type-III domains span residues 1383–1477 (PPDQ…THGR) and 1478–1578 (EPSF…TIPP). Asn-1561 carries an N-linked (GlcNAc...) asparagine glycan. The chain crosses the membrane as a helical span at residues 1592–1612 (LFTIGCPVILATLGVALLFVV). The Cytoplasmic portion of the chain corresponds to 1613 to 2053 (RKKRKEKRLK…GAYSKSYTLV (441 aa)). 4 disordered regions span residues 1716 to 1741 (LIDM…HSTR), 1773 to 1803 (HGVT…STES), 1840 to 1862 (SSDQ…STPS), and 1974 to 2053 (LAMP…YTLV). Positions 1732-1741 (KNVKSAHSTR) are enriched in basic residues. The span at 1773–1789 (HGVTVTESDSYSASLSQ) shows a compositional bias: polar residues. Over residues 1977–1993 (PAPPAGTAPPAPGPTPS) the composition is skewed to pro residues.

Homodimer; mediates homophilic interactions to promote cell adhesion. In terms of tissue distribution, in the retina, expressed in the rod photoreceptors, AII amacrine cells and rod bipolar cells (at protein level).

It localises to the cell membrane. The protein localises to the synapse. In terms of biological role, cell adhesion molecule that plays a role in neuronal self-avoidance. Promotes repulsion between specific neuronal processes of either the same cell or the same subtype of cells. Promotes both isoneuronal self-avoidance for creating an orderly neurite arborization in retinal rod bipolar cells and heteroneuronal self-avoidance to maintain mosaic spacing between AII amacrine cells. Adhesion molecule that promotes lamina-specific synaptic connections in the retina: expressed in specific subsets of interneurons and retinal ganglion cells (RGCs) and promotes synaptic connectivity via homophilic interactions. This Mus musculus (Mouse) protein is Cell adhesion molecule DSCAML1 (Dscaml1).